The following is a 916-amino-acid chain: Calcium homeostasis endoplasmic reticulum protein (916 aa).

An N-acetylmethionine modification is found at Met1. The stretch at 15–57 is one SURP motif repeat; sequence VIDKLAQFVARNGPEFEKMTMEKQKDNPKFSFLFGGEFYSYYK. Lys18 bears the N6-acetyllysine mark. Positions 149–289 constitute a CID domain; it reads ETQLDMNEFD…QLQSPALGLG (141 aa). Disordered stretches follow at residues 336–549 and 601–635; these read QQQQ…RFPP and HPPW…PHIN. Positions 354–374 are enriched in pro residues; that stretch reads TPPPPAPPPAPAPAPAIPPTT. Positions 480-501 are enriched in polar residues; the sequence is WNNQPDAAWNSQFEGPWNSQHE. Positions 525–541 are enriched in pro residues; the sequence is PFPPHQQHPQFNQPPHP. Tyr714 is modified (phosphotyrosine). The interval 722–878 is disordered; that stretch reads RARRRKGQEK…DPIKGGDVRD (157 aa). Positions 739–749 are enriched in basic residues; sequence SRSRSKSRGRS. Positions 750–766 are enriched in low complexity; it reads SSRSNSRSSKSSGSYSR. Over residues 767 to 815 the composition is skewed to basic residues; sequence SRSRSCSRSYSRSRSRSRSRSRSSRSRSRSQSRSRSKSYSPGRRRRSRS. Phosphoserine is present on residues Ser813, Ser815, and Ser817. Phosphothreonine is present on Thr819. Ser828 bears the Phosphoserine mark. Residues 841–891 enclose the G-patch domain; sequence EENKGHQMLVKMGWSGSGGLGAKEQGIQDPIKGGDVRDKWDQYKGVGVALD. A Glycyl lysine isopeptide (Lys-Gly) (interchain with G-Cter in SUMO2) cross-link involves residue Lys844. 2 positions are modified to phosphoserine: Ser855 and Ser857. Residue Lys872 forms a Glycyl lysine isopeptide (Lys-Gly) (interchain with G-Cter in SUMO2) linkage. N6-acetyllysine is present on Lys879. Ser904 carries the phosphoserine modification.

In terms of tissue distribution, expressed in brain, placenta, lung, liver, kidney, pancreas, cardiac and skeletal muscle, and in cultured HEL and Dami cells.

Its subcellular location is the cytoplasm. The protein localises to the perinuclear region. The protein resides in the endoplasmic reticulum. Functionally, involved in calcium homeostasis, growth and proliferation. The sequence is that of Calcium homeostasis endoplasmic reticulum protein from Homo sapiens (Human).